Reading from the N-terminus, the 152-residue chain is Transcriptional regulator MraZ (152 aa).

SpoVT-AbrB domains are found at residues 5 to 52 (ASAI…PLHE) and 81 to 124 (AHEV…DEQA).

It belongs to the MraZ family. In terms of assembly, forms oligomers.

It is found in the cytoplasm. The protein resides in the nucleoid. The polypeptide is Transcriptional regulator MraZ (Shewanella sp. (strain MR-7)).